The sequence spans 372 residues: Ligninase A (372 aa).

The signal sequence occupies residues 1–21 (MAFKQLVAAISLALSLTTANA). Residues 22–28 (AVVKEKR) constitute a propeptide that is removed on maturation. 4 cysteine pairs are disulfide-bonded: Cys31/Cys43, Cys42/Cys313, Cys62/Cys148, and Cys277/Cys345. The active-site Proton acceptor is His75. Ca(2+) contacts are provided by Asp76, Gly94, Asp96, and Ser98. His204 is a heme b binding site. Ser205, Asp222, Thr224, Ile227, and Asp229 together coordinate Ca(2+). An N-linked (GlcNAc...) asparagine glycan is attached at Asn285.

This sequence belongs to the peroxidase family. Ligninase subfamily. Requires heme b as cofactor. It depends on Ca(2+) as a cofactor.

It catalyses the reaction 1-(3,4-dimethoxyphenyl)-2-(2-methoxyphenoxy)propane-1,3-diol + H2O2 = 3,4-dimethoxybenzaldehyde + guaiacol + glycolaldehyde + H2O. The enzyme catalyses 2 (3,4-dimethoxyphenyl)methanol + H2O2 = 2 (3,4-dimethoxyphenyl)methanol radical + 2 H2O. It participates in secondary metabolite metabolism; lignin degradation. Functionally, depolymerization of lignin. Catalyzes the C(alpha)-C(beta) cleavage of the propyl side chains of lignin. The sequence is that of Ligninase A (LIPA) from Phanerodontia chrysosporium (White-rot fungus).